A 297-amino-acid polypeptide reads, in one-letter code: N-acetylmuramic acid 6-phosphate etherase (297 aa).

In terms of domain architecture, SIS spans 55–218; sequence AAKRYSKGGR…STGVMIKQGK (164 aa). Glu-83 (proton donor) is an active-site residue. Residue Glu-114 is part of the active site.

The protein belongs to the GCKR-like family. MurNAc-6-P etherase subfamily. In terms of assembly, homodimer.

The catalysed reaction is N-acetyl-D-muramate 6-phosphate + H2O = N-acetyl-D-glucosamine 6-phosphate + (R)-lactate. It participates in amino-sugar metabolism; N-acetylmuramate degradation. In terms of biological role, specifically catalyzes the cleavage of the D-lactyl ether substituent of MurNAc 6-phosphate, producing GlcNAc 6-phosphate and D-lactate. In Lactobacillus gasseri (strain ATCC 33323 / DSM 20243 / BCRC 14619 / CIP 102991 / JCM 1131 / KCTC 3163 / NCIMB 11718 / NCTC 13722 / AM63), this protein is N-acetylmuramic acid 6-phosphate etherase.